A 171-amino-acid polypeptide reads, in one-letter code: Protein X (171 aa).

The next 3 helical transmembrane spans lie at 11 to 31 (SWYQIFIAFSLTYTPIAIYSL), 38 to 58 (LAGIVNIFIFINCCVSFVYLM), and 73 to 93 (AVIALVWGIYTLVKIVDWLVI).

It localises to the virion membrane. This Mus musculus domesticus (western European house mouse) protein is Protein X (VPX).